The following is a 169-amino-acid chain: S-ribosylhomocysteine lyase (169 aa).

Fe cation-binding residues include His54, His58, and Cys128.

This sequence belongs to the LuxS family. As to quaternary structure, homodimer. Requires Fe cation as cofactor.

It carries out the reaction S-(5-deoxy-D-ribos-5-yl)-L-homocysteine = (S)-4,5-dihydroxypentane-2,3-dione + L-homocysteine. Functionally, involved in the synthesis of autoinducer 2 (AI-2) which is secreted by bacteria and is used to communicate both the cell density and the metabolic potential of the environment. The regulation of gene expression in response to changes in cell density is called quorum sensing. Catalyzes the transformation of S-ribosylhomocysteine (RHC) to homocysteine (HC) and 4,5-dihydroxy-2,3-pentadione (DPD). The sequence is that of S-ribosylhomocysteine lyase from Shewanella pealeana (strain ATCC 700345 / ANG-SQ1).